Consider the following 1058-residue polypeptide: Carbamoyl phosphate synthase large chain (1058 aa).

Residues 1–401 (MAKRTDIKKI…CLLKACRSLE (401 aa)) are carboxyphosphate synthetic domain. Positions 129, 169, 175, 176, 208, 210, 215, 241, 242, 243, 284, and 298 each coordinate ATP. Positions 133–327 (KQLMKELGEP…IAKIAAKIAV (195 aa)) constitute an ATP-grasp 1 domain. Residues glutamine 284, glutamate 298, and asparagine 300 each coordinate Mg(2+). Mn(2+) is bound by residues glutamine 284, glutamate 298, and asparagine 300. The tract at residues 402–546 (IGVDHNELKG…YSTYEWENES (145 aa)) is oligomerization domain. Residues 547–929 (IKSEKESVIV…ALYKAFEASY (383 aa)) are carbamoyl phosphate synthetic domain. An ATP-grasp 2 domain is found at 671-861 (EKALKDLGIP…MAQVATKLIL (191 aa)). ATP-binding residues include arginine 707, serine 746, isoleucine 748, glutamate 752, glycine 777, valine 778, histidine 779, serine 780, glutamine 820, and glutamate 832. Positions 820, 832, and 834 each coordinate Mg(2+). The Mn(2+) site is built by glutamine 820, glutamate 832, and asparagine 834. The region spanning 930–1058 (LHMPEYGTIV…ESRTFSIEAI (129 aa)) is the MGS-like domain. Residues 930–1058 (LHMPEYGTIV…ESRTFSIEAI (129 aa)) are allosteric domain.

It belongs to the CarB family. In terms of assembly, composed of two chains; the small (or glutamine) chain promotes the hydrolysis of glutamine to ammonia, which is used by the large (or ammonia) chain to synthesize carbamoyl phosphate. Tetramer of heterodimers (alpha,beta)4. The cofactor is Mg(2+). Requires Mn(2+) as cofactor.

The catalysed reaction is hydrogencarbonate + L-glutamine + 2 ATP + H2O = carbamoyl phosphate + L-glutamate + 2 ADP + phosphate + 2 H(+). The enzyme catalyses hydrogencarbonate + NH4(+) + 2 ATP = carbamoyl phosphate + 2 ADP + phosphate + 2 H(+). It functions in the pathway amino-acid biosynthesis; L-arginine biosynthesis; carbamoyl phosphate from bicarbonate: step 1/1. It participates in pyrimidine metabolism; UMP biosynthesis via de novo pathway; (S)-dihydroorotate from bicarbonate: step 1/3. Large subunit of the glutamine-dependent carbamoyl phosphate synthetase (CPSase). CPSase catalyzes the formation of carbamoyl phosphate from the ammonia moiety of glutamine, carbonate, and phosphate donated by ATP, constituting the first step of 2 biosynthetic pathways, one leading to arginine and/or urea and the other to pyrimidine nucleotides. The large subunit (synthetase) binds the substrates ammonia (free or transferred from glutamine from the small subunit), hydrogencarbonate and ATP and carries out an ATP-coupled ligase reaction, activating hydrogencarbonate by forming carboxy phosphate which reacts with ammonia to form carbamoyl phosphate. The protein is Carbamoyl phosphate synthase large chain of Streptococcus equi subsp. zooepidemicus (strain H70).